Consider the following 952-residue polypeptide: DNA topoisomerase 1 (952 aa).

Residues 12 to 135 (RRLVIVESPA…VKRMVFHEIT (124 aa)) enclose the Toprim domain. Glu-18 and Asp-104 together coordinate Mg(2+). One can recognise a Topo IA-type catalytic domain in the interval 150-602 (NQKLVDAQET…RFYFGEGDGT (453 aa)). The segment at 184–189 (SAGRVQ) is interaction with DNA. Tyr-334 serves as the catalytic O-(5'-phospho-DNA)-tyrosine intermediate. The tract at residues 847–952 (RFGPYVTDGE…KATASKTSED (106 aa)) is disordered. Residues 871–884 (TPERGYELLAEKRA) are compositionally biased toward basic and acidic residues. Basic residues predominate over residues 885-906 (KGPAKKTAKKAVKKTAAKKAPA). 2 stretches are compositionally biased toward low complexity: residues 907–930 (KKAA…AAKS) and 937–952 (AKTA…TSED).

The protein belongs to the type IA topoisomerase family. As to quaternary structure, monomer. Mg(2+) serves as cofactor.

The enzyme catalyses ATP-independent breakage of single-stranded DNA, followed by passage and rejoining.. Releases the supercoiling and torsional tension of DNA, which is introduced during the DNA replication and transcription, by transiently cleaving and rejoining one strand of the DNA duplex. Introduces a single-strand break via transesterification at a target site in duplex DNA. The scissile phosphodiester is attacked by the catalytic tyrosine of the enzyme, resulting in the formation of a DNA-(5'-phosphotyrosyl)-enzyme intermediate and the expulsion of a 3'-OH DNA strand. The free DNA strand then undergoes passage around the unbroken strand, thus removing DNA supercoils. Finally, in the religation step, the DNA 3'-OH attacks the covalent intermediate to expel the active-site tyrosine and restore the DNA phosphodiester backbone. In terms of biological role, relaxes supercoiled plasmid in vitro; in the presence of sIHF (integration host factor) relaxation is decreased. In Streptomyces coelicolor (strain ATCC BAA-471 / A3(2) / M145), this protein is DNA topoisomerase 1.